The sequence spans 457 residues: tRNA modification GTPase MnmE (457 aa).

Residues arginine 25, glutamate 87, and arginine 126 each coordinate (6S)-5-formyl-5,6,7,8-tetrahydrofolate. The 155-residue stretch at 223–377 folds into the TrmE-type G domain; the sequence is GISTAIIGRP…IEERINNLFF (155 aa). Asparagine 233 is a binding site for K(+). GTP is bound by residues 233–238, 252–258, and 277–280; these read NVGKSS, TDIAGTT, and DTAG. Residue serine 237 participates in Mg(2+) binding. K(+)-binding residues include threonine 252, isoleucine 254, and threonine 257. Residue threonine 258 coordinates Mg(2+). Lysine 457 lines the (6S)-5-formyl-5,6,7,8-tetrahydrofolate pocket.

This sequence belongs to the TRAFAC class TrmE-Era-EngA-EngB-Septin-like GTPase superfamily. TrmE GTPase family. As to quaternary structure, homodimer. Heterotetramer of two MnmE and two MnmG subunits. It depends on K(+) as a cofactor.

Its subcellular location is the cytoplasm. Exhibits a very high intrinsic GTPase hydrolysis rate. Involved in the addition of a carboxymethylaminomethyl (cmnm) group at the wobble position (U34) of certain tRNAs, forming tRNA-cmnm(5)s(2)U34. The sequence is that of tRNA modification GTPase MnmE from Streptococcus pneumoniae serotype 4 (strain ATCC BAA-334 / TIGR4).